The following is a 148-amino-acid chain: Myosin light chain 3, skeletal muscle isoform (148 aa).

Position 1 is an N-acetylthreonine (Thr1). 2 consecutive EF-hand domains span residues 6–41 (DQIE…LGQN) and 82–117 (GTYD…LGEK).

As to quaternary structure, myosin is a hexamer of 2 heavy chains and 4 light chains.

The polypeptide is Myosin light chain 3, skeletal muscle isoform (Chelon ramada (Thin-lipped grey mullet)).